The primary structure comprises 529 residues: F-box/LRR-repeat protein At5g63520 (529 aa).

The segment at 1-22 (MAEVSLTKKEMTTKGKSENSKK) is disordered. In terms of domain architecture, F-box spans 31 to 78 (VPIAAMNEDLLHNILLRLPAKSFAFASCVNRFWSSVCNRILSRPKMIS). LRR repeat units follow at residues 265–288 (GNEP…IFAR) and 418–441 (QVYL…LRNL).

The chain is F-box/LRR-repeat protein At5g63520 from Arabidopsis thaliana (Mouse-ear cress).